The following is a 245-amino-acid chain: 1-(5-phosphoribosyl)-5-[(5-phosphoribosylamino)methylideneamino] imidazole-4-carboxamide isomerase (245 aa).

The active-site Proton acceptor is the Asp8. Residue Asp130 is the Proton donor of the active site.

Belongs to the HisA/HisF family.

Its subcellular location is the cytoplasm. The enzyme catalyses 1-(5-phospho-beta-D-ribosyl)-5-[(5-phospho-beta-D-ribosylamino)methylideneamino]imidazole-4-carboxamide = 5-[(5-phospho-1-deoxy-D-ribulos-1-ylimino)methylamino]-1-(5-phospho-beta-D-ribosyl)imidazole-4-carboxamide. The protein operates within amino-acid biosynthesis; L-histidine biosynthesis; L-histidine from 5-phospho-alpha-D-ribose 1-diphosphate: step 4/9. This is 1-(5-phosphoribosyl)-5-[(5-phosphoribosylamino)methylideneamino] imidazole-4-carboxamide isomerase from Pseudomonas putida (strain ATCC 47054 / DSM 6125 / CFBP 8728 / NCIMB 11950 / KT2440).